We begin with the raw amino-acid sequence, 584 residues long: Pescadillo homolog (584 aa).

A required for 28S ribosomal RNA processing region spans residues 1–54 (MGGLEKKKYERGSATNYITRNKARKKLQLSLPDFRRLCILKGIYPHEPKHKKKV). The tract at residues 1–257 (MGGLEKKKYE…PKLEGQAQAE (257 aa)) is sufficient for nucleolar localization. At Lys98 the chain carries N6-acetyllysine. The sufficient for interaction with MAP1B stretch occupies residues 312–414 (RKKELEAQEK…LLLPVAEYFP (103 aa)). The BRCT domain maps to 321 to 414 (KHKKLFEGLK…LLLPVAEYFP (94 aa)). The segment at 449–510 (DPGHLEEEEE…EEKKPQVMAG (62 aa)) is disordered. A compositionally biased stretch (acidic residues) spans 454–489 (EEEEEEDEDDDNEGDVAAENEEEDVEVESEEEEEEE). Residues 496–505 (EQHRLEEKKP) are compositionally biased toward basic and acidic residues. Lys513 participates in a covalent cross-link: Glycyl lysine isopeptide (Lys-Gly) (interchain with G-Cter in SUMO1); alternate. A Glycyl lysine isopeptide (Lys-Gly) (interchain with G-Cter in SUMO2); alternate cross-link involves residue Lys513. Residues 535-584 (MMKKREKYLYQKIMFGKRRKIREANKLAEKRKAHDDAVRSEKKAKRTRPV) are required for 28S ribosomal RNA processing. Residues 560-575 (KLAEKRKAHDDAVRSE) are compositionally biased toward basic and acidic residues. Positions 560 to 584 (KLAEKRKAHDDAVRSEKKAKRTRPV) are disordered.

The protein belongs to the pescadillo family. Component of the PeBoW complex, composed of BOP1, PES1 and WDR12. The complex is held together by BOP1, which interacts with PES1 via its N-terminal domain and with WDR12 via a high-affinity interaction between the seven-bladed beta-propeller domains of the 2 proteins. The PeBoW complex associates with the 66S pre-ribosome. The PeBoW complex also associates with DDX27, PES1 interacts directly with DDX27. Interacts with IRS1 and UBTF. May interact with MAP1B. In terms of processing, sumoylated. In terms of tissue distribution, ubiquitous. Highest levels appear to be found in tissues that contain a population of proliferating cells, such as ovary and testis. Also appears to be highly expressed in kidney and liver. In the brain expression is restricted to neural progenitor cells and postmitotic neurons. Highly expressed in malignant astrocytes.

Its subcellular location is the nucleus. The protein resides in the nucleolus. It localises to the nucleoplasm. It is found in the chromosome. Component of the PeBoW complex, which is required for maturation of 28S and 5.8S ribosomal RNAs and formation of the 60S ribosome. This chain is Pescadillo homolog (Pes1), found in Mus musculus (Mouse).